A 145-amino-acid polypeptide reads, in one-letter code: Hemoglobin subunit beta-1 (145 aa).

Residues 1 to 145 form the Globin domain; that stretch reads TFTNDESQHI…VEAALATGYH (145 aa). The heme b site is built by histidine 62 and histidine 91.

Belongs to the globin family. In terms of assembly, major hemoglobin is a tetramer of two alpha-1 chains and two beta-1 chains. In terms of tissue distribution, red blood cells.

Functionally, involved in oxygen transport from the lung to the various peripheral tissues. This Triturus cristatus (Great crested newt) protein is Hemoglobin subunit beta-1 (HBB1).